The following is a 207-amino-acid chain: MNINAPPKRIGIMGGTFDPLHYGHLVAAEMARHEFALEKVIFIPTGNPPHKVGRRVTSPGDRYEMVKRAVQDNSFFEVSDLEIQRKGYSYTVDTLKELHELYPQHELYFITGADAFREIFTWREVQSVLSLSHFIGASRPGFDPLEFLEELKRDYPEFLPNMHLFDVPALAISSTDIRSRVKEGKPIRYLLPESVRLYIEKTGLYRI.

Belongs to the NadD family.

The enzyme catalyses nicotinate beta-D-ribonucleotide + ATP + H(+) = deamido-NAD(+) + diphosphate. Its pathway is cofactor biosynthesis; NAD(+) biosynthesis; deamido-NAD(+) from nicotinate D-ribonucleotide: step 1/1. Catalyzes the reversible adenylation of nicotinate mononucleotide (NaMN) to nicotinic acid adenine dinucleotide (NaAD). The polypeptide is Probable nicotinate-nucleotide adenylyltransferase (Desulfitobacterium hafniense (strain Y51)).